The following is a 96-amino-acid chain: UPF0235 protein ECA3630 (96 aa).

This sequence belongs to the UPF0235 family.

The protein is UPF0235 protein ECA3630 of Pectobacterium atrosepticum (strain SCRI 1043 / ATCC BAA-672) (Erwinia carotovora subsp. atroseptica).